A 79-amino-acid chain; its full sequence is Putative Fis-like DNA-binding protein (79 aa).

A DNA-binding region (H-T-H motif) is located at residues Gln55–Ile74.

The protein belongs to the transcriptional regulatory Fis family.

The chain is Putative Fis-like DNA-binding protein from Neisseria meningitidis serogroup A / serotype 4A (strain DSM 15465 / Z2491).